Reading from the N-terminus, the 137-residue chain is UPF0146 protein MJ0688 (137 aa).

This sequence belongs to the UPF0146 family.

This chain is UPF0146 protein MJ0688, found in Methanocaldococcus jannaschii (strain ATCC 43067 / DSM 2661 / JAL-1 / JCM 10045 / NBRC 100440) (Methanococcus jannaschii).